Reading from the N-terminus, the 328-residue chain is uncharacterized protein (328 aa).

A G-patch domain is found at 10–55; that stretch reads KMGFGHAMLLKMGWKGKGLGVEEDGRTEIIVNKKKQDKVGVGASIS. Residues 97–291 form a disordered region; it reads EKITFKRTIK…KKSFSVSKTR (195 aa). Over residues 101-110 the composition is skewed to basic residues; sequence FKRTIKKNSK. The segment covering 116 to 126 has biased composition (acidic residues); sequence SDSDSDSDSES. Composition is skewed to low complexity over residues 141 to 158 and 210 to 240; these read DSDS…SSSS and SSSS…SSSE. The segment covering 248–257 has biased composition (basic residues); sequence KNKNKNKNKK.

This is an uncharacterized protein from Dictyostelium discoideum (Social amoeba).